A 198-amino-acid chain; its full sequence is Large ribosomal subunit protein bL9 (198 aa).

Belongs to the bacterial ribosomal protein bL9 family.

Binds to the 23S rRNA. The chain is Large ribosomal subunit protein bL9 from Bartonella tribocorum (strain CIP 105476 / IBS 506).